The sequence spans 196 residues: MTGDCMPVLVLMAAVLTVTGAVPVARLRGALPDARGCHIAQFKSLSPQELQAFKRAKDALEESLLLKDCKCRSRLFPRTWDLRQLQVRERPVALEAELALTLKVLEATADTDPALGDVLDQPLHTLHHILSQLRACIQPQPTAGPRTRGRLHHWLHRLQEAPKKESPGCLEASVTFNLFRLLTRDLNCVASGDLCV.

Residues M1–A21 form the signal peptide. 3 cysteine pairs are disulfide-bonded: C37–C136, C71–C169, and C188–C195.

The protein belongs to the lambda interferon family.

It localises to the secreted. In terms of biological role, cytokine with antiviral, antitumour and immunomodulatory activities. Plays a critical role in the antiviral host defense, predominantly in the epithelial tissues. Acts as a ligand for the heterodimeric class II cytokine receptor composed of IL10RB and IFNLR1, and receptor engagement leads to the activation of the JAK/STAT signaling pathway resulting in the expression of IFN-stimulated genes (ISG), which mediate the antiviral state. Has a restricted receptor distribution and therefore restricted targets: is primarily active in epithelial cells and this cell type-selective action is because of the epithelial cell-specific expression of its receptor IFNLR1. Seems not to be essential for early virus-activated host defense in vaginal infection, but plays an important role in Toll-like receptor (TLR)-induced antiviral defense. Plays a significant role in the antiviral immune defense in the intestinal epithelium. Exerts an immunomodulatory effect by up-regulating MHC class I antigen expression. This is Interferon lambda-3 (IFNL3) from Homo sapiens (Human).